The sequence spans 109 residues: Nucleoid-associated protein HD_0326 (109 aa).

The protein belongs to the YbaB/EbfC family. In terms of assembly, homodimer.

Its subcellular location is the cytoplasm. It localises to the nucleoid. Functionally, binds to DNA and alters its conformation. May be involved in regulation of gene expression, nucleoid organization and DNA protection. This is Nucleoid-associated protein HD_0326 from Haemophilus ducreyi (strain 35000HP / ATCC 700724).